We begin with the raw amino-acid sequence, 473 residues long: MKTLYSLRRFYPVETLFNGTLALAGRDQETTGFAWWAGNARLINLSGKLLGAHVAHAGLIVFWAGAMNLFEVAHFVPEKPMYEQGFILLPHLATLGWGVGPGGEVIDTFPYFVSGVLHLISSAVLGFGGIYHALLGPETLEESFPFFGYVWKDRNKMTTILGIHLILLGIGAFLLVFKALSFGGVYDTWAPGGGDVRKITNLTLSPSVLFGYLLKSPFGGEGWIVSVDDLEDIIGGHVWLGSICILGGIWHILTKPFAWARRALVWSGEAYLSYSLGALSVFGFIACCFVWFNNTAYPSEFYGPTGPEASQAQAFTFLVRDQRLGANVGSAQGPTGLGKYLMRSPTGEVIFGGETMRFWDLRAPWLEPLRGPNGLDLSRLKKDIQPWQERRSAEYMTHAPLGSLNSVGGVATEINAVNYVSPRSWLATSHFVLGFFLFVGHLWHAGRARAAAAGFEKGIDRDFEPVLSMTPLN.

Positions 1 to 14 (MKTLYSLRRFYPVE) are excised as a propeptide. Position 15 is an N-acetylthreonine (threonine 15). Threonine 15 is modified (phosphothreonine). 5 consecutive transmembrane segments (helical) span residues 69-93 (LFEVAHFVPEKPMYEQGFILLPHLA), 134-155 (LLGPETLEESFPFFGYVWKDRN), 178-200 (KALSFGGVYDTWAPGGGDVRKIT), 255-275 (KPFAWARRALVWSGEAYLSYS), and 291-312 (WFNNTAYPSEFYGPTGPEASQA). Position 367 (glutamate 367) interacts with [CaMn4O5] cluster. Residues 447-471 (RARAAAAGFEKGIDRDFEPVLSMTP) traverse the membrane as a helical segment.

The protein belongs to the PsbB/PsbC family. PsbC subfamily. As to quaternary structure, PSII is composed of 1 copy each of membrane proteins PsbA, PsbB, PsbC, PsbD, PsbE, PsbF, PsbH, PsbI, PsbJ, PsbK, PsbL, PsbM, PsbT, PsbX, PsbY, PsbZ, Psb30/Ycf12, at least 3 peripheral proteins of the oxygen-evolving complex and a large number of cofactors. It forms dimeric complexes. It depends on Binds multiple chlorophylls and provides some of the ligands for the Ca-4Mn-5O cluster of the oxygen-evolving complex. It may also provide a ligand for a Cl- that is required for oxygen evolution. PSII binds additional chlorophylls, carotenoids and specific lipids. as a cofactor.

The protein resides in the plastid. It is found in the chloroplast thylakoid membrane. In terms of biological role, one of the components of the core complex of photosystem II (PSII). It binds chlorophyll and helps catalyze the primary light-induced photochemical processes of PSII. PSII is a light-driven water:plastoquinone oxidoreductase, using light energy to abstract electrons from H(2)O, generating O(2) and a proton gradient subsequently used for ATP formation. This chain is Photosystem II CP43 reaction center protein, found in Pelargonium hortorum (Common geranium).